The following is a 260-amino-acid chain: Lysine/arginine/ornithine-binding periplasmic protein (260 aa).

An N-terminal signal peptide occupies residues 1 to 22; that stretch reads MKKSILALSLLVGLSTAASSYA. D33 contacts L-arginine. D33 is a binding site for L-lysine. Residue D33 participates in L-ornithine binding. A disulfide bond links C60 and C67. L-arginine contacts are provided by S91, S92, S94, R99, T143, and D183. L-ornithine is bound by residues S91, S92, S94, R99, T143, and D183. S92, S94, R99, and T143 together coordinate L-lysine.

This sequence belongs to the bacterial solute-binding protein 3 family. The complex is composed of two ATP-binding proteins (HisP), two transmembrane proteins (HisM and HisQ) and a solute-binding protein (ArgT).

It is found in the periplasm. Functionally, part of the ABC transporter complex HisPMQ-ArgT involved in lysine/arginine/ornithine transport. Binds lysine, arginine and ornithine. Stimulates ATPase activity of HisP. The protein is Lysine/arginine/ornithine-binding periplasmic protein (argT) of Escherichia coli (strain K12).